The following is a 279-amino-acid chain: Stathmin domain-containing protein 1 (279 aa).

Disordered stretches follow at residues 1–110 (MGCG…ERPK) and 178–254 (AAEE…VAQM). The N-myristoyl glycine moiety is linked to residue glycine 2. The span at 22 to 32 (KGWEEGSKADV) shows a compositional bias: basic and acidic residues. Polar residues predominate over residues 34–45 (VTSSKENCSPQT). Residues 121–248 (QGIIQSRSKV…GEPLKRKKSE (128 aa)) form the SLD domain. Composition is skewed to basic and acidic residues over residues 178–191 (AAEERRKTKKEEIR) and 232–242 (EKSDVQEGEPL).

This is Stathmin domain-containing protein 1 (Stmnd1) from Mus musculus (Mouse).